A 314-amino-acid chain; its full sequence is Olfactory receptor 1E2 (314 aa).

Residues 1 to 25 (MMGQNQTSISDFLLLGLPIQPEQQN) lie on the Extracellular side of the membrane. N-linked (GlcNAc...) asparagine glycosylation occurs at asparagine 5. A helical membrane pass occupies residues 26–49 (LCYALFLAMYLTTLLGNLLIIVLI). The Cytoplasmic portion of the chain corresponds to 50 to 57 (RLDSHLHT). A helical membrane pass occupies residues 58 to 79 (PMYLFLSNLSFSDLCFSSVTIP). Residues 80–100 (KLLQNMQNQDPSIPYADCLTQ) lie on the Extracellular side of the membrane. A disulfide bond links cysteine 97 and cysteine 189. Residues 101 to 120 (MHFFLLFGDLESFLLVAMAY) traverse the membrane as a helical segment. The Cytoplasmic portion of the chain corresponds to 121-139 (DRYVAICFPLHYTAIMSPM). A helical transmembrane segment spans residues 140–158 (LCLSVVALSWVLTTFHAML). The Extracellular segment spans residues 159–196 (HTLLMARLCFCADNVIPHFFCDMSALLKLACSDTRVNE). A helical transmembrane segment spans residues 197–219 (WVIFIMGGLIVVIPFLLILGSYA). At 220 to 236 (RIVSSILKVPSFKGICK) the chain is on the cytoplasmic side. A helical membrane pass occupies residues 237–260 (ALSTCGSHLSVVSLFYGTVIGLYL). Over 261 to 272 (CPSANSSTLKDT) the chain is Extracellular. Asparagine 265 carries N-linked (GlcNAc...) asparagine glycosylation. Residues 273–292 (VMAMMYTVVTPMLNPFIYSL) traverse the membrane as a helical segment. The Cytoplasmic portion of the chain corresponds to 293 to 314 (RNRDMKGALERVICKRKNPFLL).

This sequence belongs to the G-protein coupled receptor 1 family.

It is found in the cell membrane. Functionally, odorant receptor. The polypeptide is Olfactory receptor 1E2 (OR1E2) (Pan troglodytes (Chimpanzee)).